A 206-amino-acid chain; its full sequence is Outer-membrane lipoprotein carrier protein (206 aa).

The N-terminal stretch at 1–21 is a signal peptide; that stretch reads MKKLLCAVLLSPLLYSNAVLA.

This sequence belongs to the LolA family. As to quaternary structure, monomer.

It is found in the periplasm. Functionally, participates in the translocation of lipoproteins from the inner membrane to the outer membrane. Only forms a complex with a lipoprotein if the residue after the N-terminal Cys is not an aspartate (The Asp acts as a targeting signal to indicate that the lipoprotein should stay in the inner membrane). In Shewanella oneidensis (strain ATCC 700550 / JCM 31522 / CIP 106686 / LMG 19005 / NCIMB 14063 / MR-1), this protein is Outer-membrane lipoprotein carrier protein.